Here is a 557-residue protein sequence, read N- to C-terminus: TGF-beta receptor type-2 (557 aa).

The N-terminal stretch at 1 to 23 (MPPRLRPLLLRVSLWVLVGSSSP) is a signal peptide. The Extracellular segment spans residues 24 to 155 (ALLHDRSKEN…KPEEKDEISK (132 aa)). 6 disulfides stabilise this stretch: Cys41–Cys74, Cys44–Cys61, Cys51–Cys57, Cys67–Cys91, Cys111–Cys126, and Cys128–Cys133. Asn62 and Asn84 each carry an N-linked (GlcNAc...) asparagine glycan. Residues 156-176 (VTIISLVPLLVISVAVIVIFY) traverse the membrane as a helical segment. At 177-557 (AYRTHKKRKL…PEDGSVTTAK (381 aa)) the chain is on the cytoplasmic side. Residues 234-537 (IELDIVVGKG…FSEFKHHDKL (304 aa)) enclose the Protein kinase domain. ATP-binding positions include 240 to 248 (VGKGRFAEV) and Lys267. Asp369 acts as the Proton acceptor in catalysis.

The protein belongs to the protein kinase superfamily. TKL Ser/Thr protein kinase family. TGFB receptor subfamily. As to quaternary structure, heterohexamer; TGFB1, TGFB2 and TGFB3 homodimeric ligands assemble a functional receptor composed of two TGFBR1 and TGFBR2 heterodimers to form a ligand-receptor heterohexamer. The cofactor is Mg(2+). It depends on Mn(2+) as a cofactor. Post-translationally, phosphorylated on a Ser/Thr residue in the cytoplasmic domain. As to expression, detected at low levels in embryonic heart, brain and lung. Detected at high levels in hatchling heart and lung.

The protein resides in the cell membrane. The protein localises to the membrane raft. The enzyme catalyses L-threonyl-[receptor-protein] + ATP = O-phospho-L-threonyl-[receptor-protein] + ADP + H(+). The catalysed reaction is L-seryl-[receptor-protein] + ATP = O-phospho-L-seryl-[receptor-protein] + ADP + H(+). Its function is as follows. Transmembrane serine/threonine kinase forming with the TGF-beta type I serine/threonine kinase receptor, TGFBR1, the non-promiscuous receptor for the TGF-beta cytokines TGFB1, TGFB2 and TGFB3. Transduces the TGFB1, TGFB2 and TGFB3 signal from the cell surface to the cytoplasm and is thus regulating a plethora of physiological and pathological processes including cell cycle arrest in epithelial and hematopoietic cells, control of mesenchymal cell proliferation and differentiation, wound healing, extracellular matrix production, immunosuppression and carcinogenesis. The formation of the receptor complex composed of 2 TGFBR1 and 2 TGFBR2 molecules symmetrically bound to the cytokine dimer results in the phosphorylation and the activation of TGFRB1 by the constitutively active TGFBR2. Activated TGFBR1 phosphorylates SMAD2 which dissociates from the receptor and interacts with SMAD4. The SMAD2-SMAD4 complex is subsequently translocated to the nucleus where it modulates the transcription of the TGF-beta-regulated genes. This constitutes the canonical SMAD-dependent TGF-beta signaling cascade. Also involved in non-canonical, SMAD-independent TGF-beta signaling pathways. The sequence is that of TGF-beta receptor type-2 (TGFBR2) from Gallus gallus (Chicken).